An 807-amino-acid chain; its full sequence is AP-5 complex subunit zeta-1 (807 aa).

As to quaternary structure, probably part of the adaptor protein complex 5 (AP-5) a tetramer composed of AP5B1, AP5M1, AP5S1 and AP5Z1. Interacts with ZFYVE26 and SPG11.

The protein resides in the cytoplasm. It is found in the nucleus. As part of AP-5, a probable fifth adaptor protein complex it may be involved in endosomal transport. According to PubMed:20613862 it is a putative helicase required for efficient homologous recombination DNA double-strand break repair. In Homo sapiens (Human), this protein is AP-5 complex subunit zeta-1 (AP5Z1).